The primary structure comprises 345 residues: Serine/arginine-rich splicing factor 6 (345 aa).

In terms of domain architecture, RRM 1 spans 1–72 (MPRVYIGRLS…ERVIVEHARG (72 aa)). Phosphoserine is present on residues Ser-45, Ser-81, and Ser-84. Residues 75 to 102 (RDRDGYSYGSRSGGGGYSSRRTSGRDKY) form a disordered region. The 74-residue stretch at 110 to 183 (FRLIVENLSS…RNIRLIEDKP (74 aa)) folds into the RRM 2 domain. Lys-165 bears the N6-acetyllysine mark. The tract at residues 176-345 (IRLIEDKPRT…RSRSRSSSRD (170 aa)) is disordered. Residue Lys-182 forms a Glycyl lysine isopeptide (Lys-Gly) (interchain with G-Cter in SUMO2) linkage. Over residues 185–250 (TSHRRSYSGS…RKSRSKSKSK (66 aa)) the composition is skewed to basic residues. Composition is skewed to basic and acidic residues over residues 264–273 (RSKDEYEKSR) and 282–293 (SPKENGKGDIKS). Phosphoserine occurs at positions 299 and 301. Residue Ser-305 is modified to Phosphoserine; by DYRK1A. A phosphoserine mark is found at Ser-316 and Ser-318. Basic residues predominate over residues 323-345 (RASRSHSRSRSKSRSRSRSSSRD).

This sequence belongs to the splicing factor SR family. Binds SREK1/SFRS12. Interacts with DYRK1A. Post-translationally, extensively phosphorylated on serine residues in the RS domain. Phosphorylated by DYRK1A, probably in the RS domain. Phosphorylation by DYRK1A modulates alternative splice site selection and inhibits the expression of MAPT/Tau exon 10.

The protein localises to the nucleus. The protein resides in the nucleus speckle. Plays a role in constitutive splicing and modulates the selection of alternative splice sites. Plays a role in the alternative splicing of MAPT/Tau exon 10. Binds to alternative exons of TNC pre-mRNA and promotes the expression of alternatively spliced TNC. Plays a role in wound healing and in the regulation of keratinocyte differentiation and proliferation via its role in alternative splicing. In Bos taurus (Bovine), this protein is Serine/arginine-rich splicing factor 6 (SRSF6).